The following is a 357-amino-acid chain: Anthranilate phosphoribosyltransferase (357 aa).

5-phospho-alpha-D-ribose 1-diphosphate contacts are provided by residues glycine 91, 94-95 (GD), threonine 99, 101-104 (NIST), 119-127 (KHGNRSVSS), and serine 131. Glycine 91 is a binding site for anthranilate. Mg(2+) is bound at residue serine 103. Asparagine 122 is a binding site for anthranilate. An anthranilate-binding site is contributed by arginine 177. Aspartate 235 and glutamate 236 together coordinate Mg(2+).

The protein belongs to the anthranilate phosphoribosyltransferase family. In terms of assembly, homodimer. Mg(2+) is required as a cofactor.

It carries out the reaction N-(5-phospho-beta-D-ribosyl)anthranilate + diphosphate = 5-phospho-alpha-D-ribose 1-diphosphate + anthranilate. The protein operates within amino-acid biosynthesis; L-tryptophan biosynthesis; L-tryptophan from chorismate: step 2/5. Functionally, catalyzes the transfer of the phosphoribosyl group of 5-phosphorylribose-1-pyrophosphate (PRPP) to anthranilate to yield N-(5'-phosphoribosyl)-anthranilate (PRA). The protein is Anthranilate phosphoribosyltransferase of Shewanella baltica (strain OS155 / ATCC BAA-1091).